A 256-amino-acid chain; its full sequence is MSMLTIGGKSFQSRLLLGTGKYPSFDIQKEAVAVSESDILTFAVRRMNIFEASQPNFLEQLDLSKYTLLPNTAGASTAEEAVRIARLAKASGLCDMIKVEVIGCSRSLLPDPVETLKASEQLLEEGFIVLPYTSDDVVLARKLEELGVHAIMPGASPIGSGQGILNPLNLSFIIEQAKVPVIVDAGIGSPKDAAYAMELGADGVLLNTAVSGADDPVKMARAMKLAVEAGRLSYEAGRIPLKQYGTASSPGEGLPV.

Lysine 98 acts as the Schiff-base intermediate with DXP in catalysis. 1-deoxy-D-xylulose 5-phosphate contacts are provided by residues glycine 159, alanine 185–glycine 186, and asparagine 207–threonine 208.

Belongs to the ThiG family. Homotetramer. Forms heterodimers with either ThiH or ThiS.

The protein resides in the cytoplasm. The enzyme catalyses [ThiS sulfur-carrier protein]-C-terminal-Gly-aminoethanethioate + 2-iminoacetate + 1-deoxy-D-xylulose 5-phosphate = [ThiS sulfur-carrier protein]-C-terminal Gly-Gly + 2-[(2R,5Z)-2-carboxy-4-methylthiazol-5(2H)-ylidene]ethyl phosphate + 2 H2O + H(+). Its pathway is cofactor biosynthesis; thiamine diphosphate biosynthesis. Its function is as follows. Catalyzes the rearrangement of 1-deoxy-D-xylulose 5-phosphate (DXP) to produce the thiazole phosphate moiety of thiamine. Sulfur is provided by the thiocarboxylate moiety of the carrier protein ThiS. In vitro, sulfur can be provided by H(2)S. This is Thiazole synthase (thiG) from Bacillus subtilis (strain 168).